The primary structure comprises 274 residues: Tropomyosin (274 aa).

Over residues 1–35 (MKLEKDNAMDRADTLEQQNKEANNRAEKSEEEVHN) the composition is skewed to basic and acidic residues. A disordered region spans residues 1-45 (MKLEKDNAMDRADTLEQQNKEANNRAEKSEEEVHNLQKRMQQLEN). Positions 1-274 (MKLEKDNAMD…DQTFSELSGY (274 aa)) form a coiled coil.

This sequence belongs to the tropomyosin family. In terms of assembly, homodimer.

Its function is as follows. Tropomyosin, in association with the troponin complex, plays a central role in the calcium dependent regulation of muscle contraction. This Metapenaeus ensis (Greasyback shrimp) protein is Tropomyosin.